Reading from the N-terminus, the 807-residue chain is Tyrosine-protein kinase receptor torso (807 aa).

Positions 1 to 28 are cleaved as a signal peptide; that stretch reads MYSEGKLLKVFLIFAGFIIFSLCGEVVS. Residues 29–370 lie on the Extracellular side of the membrane; sequence QRYPPAPGLL…RAFTPGMLRW (342 aa). 4 disulfides stabilise this stretch: C46–C61, C81–C203, C210–C239, and C259–C265. N-linked (GlcNAc...) asparagine glycans are attached at residues N54, N171, N183, and N195. 3 N-linked (GlcNAc...) asparagine glycosylation sites follow: N307, N323, and N344. Residues 371–391 traverse the membrane as a helical segment; that stretch reads VWAGATAGAGCAAGGLLAATL. Residues 392 to 807 are Cytoplasmic-facing; it reads LCCGHRRATS…SPPVIQTKTA (416 aa). Positions 439 to 738 constitute a Protein kinase domain; that stretch reads VLLHEVIGEG…PTFPELHQKL (300 aa). ATP-binding positions include 445 to 453 and K468; that span reads IGEGAFGVV. Residue D607 is the Proton acceptor of the active site.

It belongs to the protein kinase superfamily. Tyr protein kinase family. Homodimer; disulfide-linked. Requires Mg(2+) as cofactor. May be auto-phosphorylated on tyrosine residues. In terms of processing, at least one of the 3 cysteine residues Cys-381, Cys-393 or Cys-394 is involved in the formation of interchain disulfide bonds. The disulfide bond sites in the extracellular region are not involved in homodimer formation.

It is found in the cell membrane. It catalyses the reaction L-tyrosyl-[protein] + ATP = O-phospho-L-tyrosyl-[protein] + ADP + H(+). Probable receptor tyrosine kinase. During postembryonic development, involved in the initiation of metamorphosis probably by inducing the production of ecdysone in response to prothoracicotropic hormone (PTTH). Binding to PTTH stimulates activation of canonical MAPK signaling leading to ERK phosphorylation. The polypeptide is Tyrosine-protein kinase receptor torso (Bombyx mori (Silk moth)).